We begin with the raw amino-acid sequence, 176 residues long: Mitochondrial inner membrane protein Mpv17 (176 aa).

4 helical membrane passes run 18 to 38, 53 to 73, 94 to 114, and 131 to 151; these read VQVL…QQLV, TMVS…YKVL, GGFA…LNGL, and LITN…LVPL.

Belongs to the peroxisomal membrane protein PXMP2/4 family. As to expression, ubiquitous. Expressed in pancreas, kidney, muscle, liver, lung, placenta, brain and heart.

It localises to the mitochondrion inner membrane. In terms of biological role, non-selective channel that modulates the membrane potential under normal conditions and oxidative stress, and is involved in mitochondrial homeostasis. Involved in mitochondrial deoxynucleoside triphosphates (dNTP) pool homeostasis and mitochondrial DNA (mtDNA) maintenance. May be involved in the regulation of reactive oxygen species metabolism and the control of oxidative phosphorylation. This is Mitochondrial inner membrane protein Mpv17 from Homo sapiens (Human).